Reading from the N-terminus, the 486-residue chain is Probable peptidoglycan glycosyltransferase FtsW (486 aa).

At M1–W50 the chain is on the cytoplasmic side. A helical transmembrane segment spans residues L51–I71. At E72–P77 the chain is on the periplasmic side. A helical membrane pass occupies residues F78 to A98. Over M99–M112 the chain is Cytoplasmic. The chain crosses the membrane as a helical span at residues L113 to V133. At N134–N141 the chain is on the periplasmic side. A helical membrane pass occupies residues L142–A162. Topologically, residues S163 to A174 are cytoplasmic. The chain crosses the membrane as a helical span at residues T175–L195. Over Q196–F199 the chain is Periplasmic. A helical membrane pass occupies residues G200–I220. Residues G221–R222 are Cytoplasmic-facing. A helical transmembrane segment spans residues I223–Y243. At R244–D298 the chain is on the periplasmic side. A helical membrane pass occupies residues F299–L319. Residues Y320–S342 lie on the Cytoplasmic side of the membrane. Residues G343 to V363 form a helical membrane-spanning segment. At N364–T374 the chain is on the periplasmic side. Residues L375 to L395 traverse the membrane as a helical segment. At L396–A486 the chain is on the cytoplasmic side.

The protein belongs to the SEDS family. FtsW subfamily.

It is found in the cell inner membrane. It carries out the reaction [GlcNAc-(1-&gt;4)-Mur2Ac(oyl-L-Ala-gamma-D-Glu-L-Lys-D-Ala-D-Ala)](n)-di-trans,octa-cis-undecaprenyl diphosphate + beta-D-GlcNAc-(1-&gt;4)-Mur2Ac(oyl-L-Ala-gamma-D-Glu-L-Lys-D-Ala-D-Ala)-di-trans,octa-cis-undecaprenyl diphosphate = [GlcNAc-(1-&gt;4)-Mur2Ac(oyl-L-Ala-gamma-D-Glu-L-Lys-D-Ala-D-Ala)](n+1)-di-trans,octa-cis-undecaprenyl diphosphate + di-trans,octa-cis-undecaprenyl diphosphate + H(+). It functions in the pathway cell wall biogenesis; peptidoglycan biosynthesis. Peptidoglycan polymerase that is essential for cell division. This is Probable peptidoglycan glycosyltransferase FtsW from Xanthomonas oryzae pv. oryzae (strain KACC10331 / KXO85).